The chain runs to 102 residues: Protein Tat (102 aa).

Residues 1–24 (MEPVDPRLEPWKHPGSQPKTACNN) form an interaction with human CREBBP region. The tract at residues 1–48 (MEPVDPRLEPWKHPGSQPKTACNNCYCKKCCYHCQVCFLTKGLGISYG) is transactivation. Positions 22, 25, and 27 each coordinate Zn(2+). The segment at 22-37 (CNNCYCKKCCYHCQVC) is cysteine-rich. Position 28 is an N6-acetyllysine; by host PCAF (lysine 28). Zn(2+) contacts are provided by cysteine 30, histidine 33, cysteine 34, and cysteine 37. The segment at 38–48 (FLTKGLGISYG) is core. Positions 48 to 102 (GRKKRRQRRGPPQGSQTHQVSLSKQPTSQPRGDPTGPKESKEKVERETETDPAVQ) are disordered. The Nuclear localization signal, RNA-binding (TAR), and protein transduction signature appears at 49 to 57 (RKKRRQRRG). The interaction with the host capping enzyme RNGTT stretch occupies residues 49 to 86 (RKKRRQRRGPPQGSQTHQVSLSKQPTSQPRGDPTGPKE). N6-acetyllysine; by host EP300 and GCN5L2 occurs at positions 50 and 51. 2 positions are modified to asymmetric dimethylarginine; by host PRMT6: arginine 52 and arginine 53. Polar residues predominate over residues 62–77 (SQTHQVSLSKQPTSQP). Lysine 71 is covalently cross-linked (Glycyl lysine isopeptide (Lys-Gly) (interchain with G-Cter in ubiquitin)). The Cell attachment site motif lies at 78–80 (RGD). The span at 83-96 (GPKESKEKVERETE) shows a compositional bias: basic and acidic residues.

Belongs to the lentiviruses Tat family. As to quaternary structure, interacts with host CCNT1. Associates with the P-TEFb complex composed at least of Tat, P-TEFb (CDK9 and CCNT1), TAR RNA, RNA Pol II. Recruits the HATs CREBBP, TAF1/TFIID, EP300, PCAF and GCN5L2. Interacts with host KAT5/Tip60; this interaction targets the latter to degradation. Interacts with the host deacetylase SIRT1. Interacts with host capping enzyme RNGTT; this interaction stimulates RNGTT. Binds to host KDR, and to the host integrins ITGAV/ITGB3 and ITGA5/ITGB1. Interacts with host KPNB1/importin beta-1 without previous binding to KPNA1/importin alpha-1. Interacts with EIF2AK2. Interacts with host nucleosome assembly protein NAP1L1; this interaction may be required for the transport of Tat within the nucleus, since the two proteins interact at the nuclear rim. Interacts with host C1QBP/SF2P32; this interaction involves lysine-acetylated Tat. Interacts with the host chemokine receptors CCR2, CCR3 and CXCR4. Interacts with host DPP4/CD26; this interaction may trigger an anti-proliferative effect. Interacts with host LDLR. Interacts with the host extracellular matrix metalloproteinase MMP1. Interacts with host PRMT6; this interaction mediates Tat's methylation. Interacts with, and is ubiquitinated by MDM2/Hdm2. Interacts with host PSMC3 and HTATIP2. Interacts with STAB1; this interaction may overcome SATB1-mediated repression of IL2 and IL2RA (interleukin) in T cells by binding to the same domain than HDAC1. Interacts (when acetylated) with human CDK13, thereby increasing HIV-1 mRNA splicing and promoting the production of the doubly spliced HIV-1 protein Nef. Interacts with host TBP; this interaction modulates the activity of transcriptional pre-initiation complex. Interacts with host RELA. Interacts with host PLSCR1; this interaction negatively regulates Tat transactivation activity by altering its subcellular distribution. Post-translationally, asymmetrical arginine methylation by host PRMT6 seems to diminish the transactivation capacity of Tat and affects the interaction with host CCNT1. Acetylation by EP300, CREBBP, GCN5L2/GCN5 and PCAF regulates the transactivation activity of Tat. EP300-mediated acetylation of Lys-50 promotes dissociation of Tat from the TAR RNA through the competitive binding to PCAF's bromodomain. In addition, the non-acetylated Tat's N-terminus can also interact with PCAF. PCAF-mediated acetylation of Lys-28 enhances Tat's binding to CCNT1. Lys-50 is deacetylated by SIRT1. In terms of processing, polyubiquitination by host MDM2 does not target Tat to degradation, but activates its transactivation function and fosters interaction with CCNT1 and TAR RNA. Post-translationally, phosphorylated by EIF2AK2 on serine and threonine residues adjacent to the basic region important for TAR RNA binding and function. Phosphorylation of Tat by EIF2AK2 is dependent on the prior activation of EIF2AK2 by dsRNA.

The protein localises to the host nucleus. The protein resides in the host nucleolus. It localises to the host cytoplasm. It is found in the secreted. Its function is as follows. Transcriptional activator that increases RNA Pol II processivity, thereby increasing the level of full-length viral transcripts. Recognizes a hairpin structure at the 5'-LTR of the nascent viral mRNAs referred to as the transactivation responsive RNA element (TAR) and recruits the cyclin T1-CDK9 complex (P-TEFb complex) that will in turn hyperphosphorylate the RNA polymerase II to allow efficient elongation. The CDK9 component of P-TEFb and other Tat-activated kinases hyperphosphorylate the C-terminus of RNA Pol II that becomes stabilized and much more processive. Other factors such as HTATSF1/Tat-SF1, SUPT5H/SPT5, and HTATIP2 are also important for Tat's function. Besides its effect on RNA Pol II processivity, Tat induces chromatin remodeling of proviral genes by recruiting the histone acetyltransferases (HATs) CREBBP, EP300 and PCAF to the chromatin. This also contributes to the increase in proviral transcription rate, especially when the provirus integrates in transcriptionally silent region of the host genome. To ensure maximal activation of the LTR, Tat mediates nuclear translocation of NF-kappa-B by interacting with host RELA. Through its interaction with host TBP, Tat may also modulate transcription initiation. Tat can reactivate a latently infected cell by penetrating in it and transactivating its LTR promoter. In the cytoplasm, Tat is thought to act as a translational activator of HIV-1 mRNAs. Functionally, extracellular circulating Tat can be endocytosed by surrounding uninfected cells via the binding to several surface receptors such as CD26, CXCR4, heparan sulfate proteoglycans (HSPG) or LDLR. Neurons are rarely infected, but they internalize Tat via their LDLR. Through its interaction with nuclear HATs, Tat is potentially able to control the acetylation-dependent cellular gene expression. Modulates the expression of many cellular genes involved in cell survival, proliferation or in coding for cytokines or cytokine receptors. Tat plays a role in T-cell and neurons apoptosis. Tat induced neurotoxicity and apoptosis probably contribute to neuroAIDS. Circulating Tat also acts as a chemokine-like and/or growth factor-like molecule that binds to specific receptors on the surface of the cells, affecting many cellular pathways. In the vascular system, Tat binds to ITGAV/ITGB3 and ITGA5/ITGB1 integrins dimers at the surface of endothelial cells and competes with bFGF for heparin-binding sites, leading to an excess of soluble bFGF. The protein is Protein Tat of Human immunodeficiency virus type 1 group M subtype B (isolate RF/HAT3) (HIV-1).